The following is a 388-amino-acid chain: MVVWPMDRTCAWALPEQYAEFRQRATLVPAKVWDGSPTWLVSRYEHVRALLVDPRVTVDPTRQPRLSEADGDGDGFRSMLMLDPPEHTRLRRMFISAFSVRQVETMRPEIEKIVDGILDRLLALEPPVDILTHLALPMSTQVICHLLGVPYEDREFFQERSELASRPNDDRSMPALIELVEYLDGLVRTKTAHPDTGLLGTAVTERLLKGEITHQELVNNAVLLLAAGHETSANQVTLSVLTLLRHPETAAELREQPELMPNAVDELLRYHSIADGLRRAATADIVLGDHTIRAGDGLIILLSSANHDGNTFGAEATFDIHRPARHHVAFGYGPHQCLGQNLARLEMEVTLGKLFRRVPALRLAQEPDALRVRQGSPIFGIDELLVEW.

Heme is bound by residues His-87, Arg-91, Arg-279, His-335, and Cys-337.

This sequence belongs to the cytochrome P450 family. The cofactor is heme.

The protein operates within antibiotic biosynthesis; mycinamicin biosynthesis. Its function is as follows. Involved in the biosynthesis of mycinamicin, a 16-membered macrolide antibiotic. Catalyzes hydroxylation at the C21 methyl group of mycinamicin VIII, the earliest macrolide form in the postpolyketide synthase tailoring pathway, leading to mycinamicin VII. Uses ferredoxin MycCII in electron transfer for catalysis. This is Mycinamicin VIII C21 methyl hydroxylase from Micromonospora griseorubida.